The sequence spans 415 residues: Gamma-glutamyl phosphate reductase (415 aa).

Belongs to the gamma-glutamyl phosphate reductase family.

The protein localises to the cytoplasm. It carries out the reaction L-glutamate 5-semialdehyde + phosphate + NADP(+) = L-glutamyl 5-phosphate + NADPH + H(+). Its pathway is amino-acid biosynthesis; L-proline biosynthesis; L-glutamate 5-semialdehyde from L-glutamate: step 2/2. Its function is as follows. Catalyzes the NADPH-dependent reduction of L-glutamate 5-phosphate into L-glutamate 5-semialdehyde and phosphate. The product spontaneously undergoes cyclization to form 1-pyrroline-5-carboxylate. The protein is Gamma-glutamyl phosphate reductase of Listeria monocytogenes serotype 4b (strain F2365).